The primary structure comprises 905 residues: Lateral signaling target protein 2 homolog (905 aa).

A Glycyl lysine isopeptide (Lys-Gly) (interchain with G-Cter in ubiquitin) cross-link involves residue K87. S334 carries the phosphoserine modification. The interval 354–441 (DEMSSLLSPP…RGQDGQSGEV (88 aa)) is disordered. Composition is skewed to polar residues over residues 358–367 (SLLSPPSACQ) and 418–437 (PGNTFELTQGNAQQRGQDGQ). At T512 the chain carries Phosphothreonine. Disordered stretches follow at residues 516-552 (NPKSPTSQDSAVAAQEAPGHGTSPLEPRAEGTGDNSH) and 589-691 (PGSV…RGDV). Basic and acidic residues-rich tracts occupy residues 542–552 (PRAEGTGDNSH) and 605–615 (GGDKEPERIDE). Residues 647-656 (SGPQVDTASR) show a composition bias toward polar residues. The span at 659-678 (GEGEVKGQPEPEARKQDPEK) shows a compositional bias: basic and acidic residues. An FYVE-type zinc finger spans residues 835–895 (DEACGFCTSC…VCTHCYMFHV (61 aa)). The Zn(2+) site is built by C841, C844, C857, C860, C865, C868, and C887. T888 carries the phosphothreonine; by MAP2K modification. Residue C890 coordinates Zn(2+).

It belongs to the lst-2 family. In terms of assembly, interacts with TRIM3. Post-translationally, monoubiquitination at Lys-87 prevents binding to phosphatidylinositol 3-phosphate (PI3P) and localization to early endosome membranes. As to expression, enriched in brain (at protein level).

It localises to the cytoplasm. The protein resides in the cytosol. It is found in the early endosome membrane. Its function is as follows. Negative regulator of epidermal growth factor receptor (EGFR) signaling. Acts by promoting EGFR degradation in endosomes when not monoubiquitinated. This Mus musculus (Mouse) protein is Lateral signaling target protein 2 homolog (Zfyve28).